The chain runs to 415 residues: WD-40 repeat-containing protein MSI2 (415 aa).

WD repeat units lie at residues 166 to 206, 215 to 255, 258 to 298, 302 to 342, and 361 to 401; these read GHDK…QDKV, GHES…MQHQ, VHER…APLH, SHEG…EEQL, and GHKA…YRDE. The short motif at 232–248 is the DWD box element; sequence LFGSAGEDGRLVIWDTR.

It belongs to the WD repeat RBAP46/RBAP48/MSI1 family.

The protein resides in the nucleus. Core histone-binding subunit that may target chromatin assembly factors, chromatin remodeling factors and histone deacetylases to their histone substrates in a manner that is regulated by nucleosomal DNA. The chain is WD-40 repeat-containing protein MSI2 (MSI2) from Arabidopsis thaliana (Mouse-ear cress).